A 302-amino-acid polypeptide reads, in one-letter code: HTH-type transcriptional regulator ArgP (302 aa).

One can recognise an HTH lysR-type domain in the interval Pro4–Thr60. The H-T-H motif DNA-binding region spans Phe21–Lys40.

The protein belongs to the LysR transcriptional regulatory family. Homodimer.

Its function is as follows. Controls the transcription of genes involved in arginine and lysine metabolism. The sequence is that of HTH-type transcriptional regulator ArgP from Yersinia pseudotuberculosis serotype O:1b (strain IP 31758).